The chain runs to 259 residues: Flagellar L-ring protein (259 aa).

A signal peptide spans 1–15 (MKRISLIALVTIMSG). The N-palmitoyl cysteine moiety is linked to residue C16. A lipid anchor (S-diacylglycerol cysteine) is attached at C16.

This sequence belongs to the FlgH family. The basal body constitutes a major portion of the flagellar organelle and consists of four rings (L,P,S, and M) mounted on a central rod.

Its subcellular location is the cell outer membrane. It is found in the bacterial flagellum basal body. Functionally, assembles around the rod to form the L-ring and probably protects the motor/basal body from shearing forces during rotation. In Vibrio vulnificus (strain CMCP6), this protein is Flagellar L-ring protein.